Reading from the N-terminus, the 65-residue chain is Conopeptide Vt3.2 (65 aa).

An N-terminal signal peptide occupies residues 1-12; that stretch reads LLFPLATLQLNA. Residues 13-48 constitute a propeptide that is removed on maturation; that stretch reads DQPVERNAENIQDLNPDKRFIFMPVPRRRGPYGSVH. The residue at position 64 (Ser64) is a Serine amide.

This sequence belongs to the conotoxin M superfamily. Homodimer; disulfide-linked. As to expression, expressed by the venom duct.

It localises to the secreted. In Conus planorbis (Planorbis cone), this protein is Conopeptide Vt3.2.